The sequence spans 96 residues: Co-chaperonin GroES (96 aa).

It belongs to the GroES chaperonin family. In terms of assembly, heptamer of 7 subunits arranged in a ring. Interacts with the chaperonin GroEL.

It is found in the cytoplasm. In terms of biological role, together with the chaperonin GroEL, plays an essential role in assisting protein folding. The GroEL-GroES system forms a nano-cage that allows encapsulation of the non-native substrate proteins and provides a physical environment optimized to promote and accelerate protein folding. GroES binds to the apical surface of the GroEL ring, thereby capping the opening of the GroEL channel. This is Co-chaperonin GroES from Idiomarina loihiensis (strain ATCC BAA-735 / DSM 15497 / L2-TR).